Consider the following 195-residue polypeptide: Putative C-P lyase subunit protein HtxG (195 aa).

The protein belongs to the PhnH family.

Functionally, belongs to an operon involved in hypophosphite oxidation. Exact function not known. This is Putative C-P lyase subunit protein HtxG (htxG) from Stutzerimonas stutzeri (Pseudomonas stutzeri).